The chain runs to 741 residues: NAD(P)H-quinone oxidoreductase subunit 5, chloroplastic (741 aa).

16 helical membrane-spanning segments follow: residues 9–29 (WIIP…LLLF), 40–60 (WAFQ…NLSI), 89–109 (IDPL…MVLI), 125–145 (FAYM…SNLI), 147–167 (IYIF…FWFT), 185–205 (GDFG…SFEF), 219–239 (NEVN…GAIA), 258–278 (TPIS…FLVA), 284–304 (FIVI…TVFF), 327–347 (LGYM…FHLI), 354–374 (ALLF…VGYC), 396–416 (NSFL…CFWS), 425–445 (WLYS…TAFY), 549–569 (LFPI…GIPF), 605–625 (VFSV…YKPV), and 721–741 (YLFF…FLNF).

It belongs to the complex I subunit 5 family. In terms of assembly, NDH is composed of at least 16 different subunits, 5 of which are encoded in the nucleus.

It localises to the plastid. The protein localises to the chloroplast thylakoid membrane. It carries out the reaction a plastoquinone + NADH + (n+1) H(+)(in) = a plastoquinol + NAD(+) + n H(+)(out). The enzyme catalyses a plastoquinone + NADPH + (n+1) H(+)(in) = a plastoquinol + NADP(+) + n H(+)(out). NDH shuttles electrons from NAD(P)H:plastoquinone, via FMN and iron-sulfur (Fe-S) centers, to quinones in the photosynthetic chain and possibly in a chloroplast respiratory chain. The immediate electron acceptor for the enzyme in this species is believed to be plastoquinone. Couples the redox reaction to proton translocation, and thus conserves the redox energy in a proton gradient. This Flaveria ramosissima (Yellowtops) protein is NAD(P)H-quinone oxidoreductase subunit 5, chloroplastic (ndhF).